Reading from the N-terminus, the 113-residue chain is MDKIKNYLEKLQAFYKLYSLNLTQGTEILIIQIIDKGNLIFDSIEKGKTFNESKIIEPLLFIFKKINTILAILKLTFTKDDLIGILQSLEEHISEFIIANYKYDFEIEEDDED.

This is an uncharacterized protein from Ureaplasma parvum serovar 3 (strain ATCC 700970).